Reading from the N-terminus, the 585-residue chain is A-type ATP synthase subunit A (585 aa).

Residue 232–239 (GPFGSGKT) coordinates ATP.

The protein belongs to the ATPase alpha/beta chains family. Has multiple subunits with at least A(3), B(3), C, D, E, F, H, I and proteolipid K(x).

Its subcellular location is the cell membrane. The catalysed reaction is ATP + H2O + 4 H(+)(in) = ADP + phosphate + 5 H(+)(out). Component of the A-type ATP synthase that produces ATP from ADP in the presence of a proton gradient across the membrane. The A chain is the catalytic subunit. This chain is A-type ATP synthase subunit A, found in Methanosphaera stadtmanae (strain ATCC 43021 / DSM 3091 / JCM 11832 / MCB-3).